A 381-amino-acid polypeptide reads, in one-letter code: F-box/LRR-repeat protein At4g14103 (381 aa).

In terms of domain architecture, F-box spans 7–60; sequence RDVISSLPDDISSHILSFLPTKEAASTSVLSKKWRYLFAFVPNLDLDDSVYLNP. LRR repeat units lie at residues 118 to 146, 171 to 196, 218 to 243, 249 to 274, 299 to 330, and 331 to 356; these read DLHL…KLRF, HFEE…VLDD, SWQE…KFTD, YPKV…LINY, TLYL…TIES, and NPRV…IFQG.

The protein is F-box/LRR-repeat protein At4g14103 of Arabidopsis thaliana (Mouse-ear cress).